The following is a 667-amino-acid chain: Autophagy-related protein 20 (667 aa).

Positions 1–94 are disordered; it reads MKQKKNRFGS…DESFKSTRAN (94 aa). Over residues 38–47 the composition is skewed to low complexity; it reads SSSSRSSSTQ. Residues 55 to 67 show a composition bias toward polar residues; it reads SLASVHTSDMHQS. Residues 76–85 are compositionally biased toward acidic residues; the sequence is DDNPFLDQDD. One can recognise a PX domain in the interval 185–331; that stretch reads KLINDRVQIL…DFLDPNNINW (147 aa). Positions 222, 224, 248, and 297 each coordinate a 1,2-diacyl-sn-glycero-3-phospho-(1D-myo-inositol-3-phosphate). Residues 524–562 are disordered; sequence ELQRGVQPRNGNTASGASGNDESSVKKPQASKSQSSSYG. Polar residues predominate over residues 532–545; it reads RNGNTASGASGNDE. Residues 549–560 are compositionally biased toward low complexity; the sequence is KKPQASKSQSSS. Residues 588-652 are a coiled coil; sequence QTTMANLIKE…SKYLKDYAKK (65 aa).

Belongs to the sorting nexin family.

It localises to the endosome membrane. The protein resides in the preautophagosomal structure membrane. Its function is as follows. Required for cytoplasm to vacuole transport (Cvt), pexophagy and mitophagy. Also involved in endoplasmic reticulum-specific autophagic process and is essential for the survival of cells subjected to severe ER stress. Functions in protein retrieval from the endocytic pathway. The polypeptide is Autophagy-related protein 20 (ATG20) (Vanderwaltozyma polyspora (strain ATCC 22028 / DSM 70294 / BCRC 21397 / CBS 2163 / NBRC 10782 / NRRL Y-8283 / UCD 57-17) (Kluyveromyces polysporus)).